Here is a 606-residue protein sequence, read N- to C-terminus: MEQDTQHVKPLQTKTDIHAVLASNGRIIYISANSKLHLGYLQGEMIGSFLKTFLHEEDQFLVESYFYNEHHLMPCTFRFIKKDHTIVWVEAAVEIVTTRAERTEREIILKMKVLEEETGHQSLNCEKHEIEPASPESTTYITDDYERLVENLPSPLCISVKGKIVYVNSAMLSMLGAKSKDAIIGKSSYEFIEEEYHDIVKNRIIRMQKGMEVGMIEQTWKRLDGTPVHLEVKASPTVYKNQQAELLLLIDISSRKKFQTILQKSRERYQLLIQNSIDTIAVIHNGKWVFMNESGISLFEAATYEDLIGKNIYDQLHPCDHEDVKERIQNIAEQKTESEIVKQSWFTFQNRVIYTEMVCIPTTFFGEAAVQVILRDISERKQTEELMLKSEKLSIAGQLAAGIAHEIRNPLTAIKGFLQLMKPTMEGNEHYFDIVFSELSRIELILSELLMLAKPQQNAVKEYLNLKKLIGEVSALLETQANLNGIFIRTSYEKDSIYINGDQNQLKQVFINLIKNAVESMPDGGTVDIIITEDEHSVHVTVKDEGEGIPEKVLNRIGEPFLTTKEKGTGLGLMVTFNIIENHQGVIHVDSHPEKGTAFKISFPKK.

One can recognise a PAS 1 domain in the interval 3–73; that stretch reads QDTQHVKPLQ…SYFYNEHHLM (71 aa). Positions 77 to 116 constitute a PAC 1 domain; sequence FRFIKKDHTIVWVEAAVEIVTTRAERTEREIILKMKVLEE. Positions 140–214 constitute a PAS 2 domain; the sequence is YITDDYERLV…IRMQKGMEVG (75 aa). The 38-residue stretch at 218–255 folds into the PAC 2 domain; that stretch reads QTWKRLDGTPVHLEVKASPTVYKNQQAELLLLIDISSR. The PAS 3 domain maps to 265–335; that stretch reads SRERYQLLIQ…ERIQNIAEQK (71 aa). The 205-residue stretch at 402-606 folds into the Histidine kinase domain; sequence GIAHEIRNPL…TAFKISFPKK (205 aa). The residue at position 405 (His405) is a Phosphohistidine; by autocatalysis.

It catalyses the reaction ATP + protein L-histidine = ADP + protein N-phospho-L-histidine.. Its function is as follows. Phosphorylates the sporulation-regulatory proteins spo0A and spo0F. It also autophosphorylates in the presence of ATP. This chain is Sporulation kinase A (kinA), found in Bacillus subtilis (strain 168).